The sequence spans 839 residues: Probable beta-glucosidase I (839 aa).

N-linked (GlcNAc...) asparagine glycosylation occurs at asparagine 197. Residue aspartate 225 is part of the active site. One can recognise a PA14 domain in the interval 396-556 (DGKTGFKFRV…TQEELISKAV (161 aa)). N-linked (GlcNAc...) asparagine glycosylation is present at asparagine 494.

Belongs to the glycosyl hydrolase 3 family.

It is found in the secreted. It carries out the reaction Hydrolysis of terminal, non-reducing beta-D-glucosyl residues with release of beta-D-glucose.. Its pathway is glycan metabolism; cellulose degradation. Its function is as follows. Beta-glucosidases are one of a number of cellulolytic enzymes, and catalyze the last step releasing glucose from the inhibitory cellobiose. This is Probable beta-glucosidase I (bglI) from Emericella nidulans (strain FGSC A4 / ATCC 38163 / CBS 112.46 / NRRL 194 / M139) (Aspergillus nidulans).